We begin with the raw amino-acid sequence, 55 residues long: Small polypeptide DEVIL 10 (55 aa).

Asn-7 is a glycosylation site (N-linked (GlcNAc...) asparagine). The segment at 19–50 (RFGDRCLLMAKQQRTRLYILRRCVSMLLCWHD) is required for DVL/RTFL small polypeptide activity. Residues 32–48 (RTRLYILRRCVSMLLCW) form a helical membrane-spanning segment.

The protein belongs to the DVL/RTFL small polypeptides family.

The protein resides in the cell membrane. Small polypeptide acting as a regulatory molecule which coordinates cellular responses required for differentiation, growth and development, probably by restricting polar cell proliferation in lateral organs and coordinating socket cell recruitment and differentiation at trichome sites. In Arabidopsis thaliana (Mouse-ear cress), this protein is Small polypeptide DEVIL 10.